Reading from the N-terminus, the 307-residue chain is UDP-3-O-acyl-N-acetylglucosamine deacetylase (307 aa).

His-78, His-241, and Asp-245 together coordinate Zn(2+). Residue His-268 is the Proton donor of the active site.

This sequence belongs to the LpxC family. The cofactor is Zn(2+).

It catalyses the reaction a UDP-3-O-[(3R)-3-hydroxyacyl]-N-acetyl-alpha-D-glucosamine + H2O = a UDP-3-O-[(3R)-3-hydroxyacyl]-alpha-D-glucosamine + acetate. Its pathway is glycolipid biosynthesis; lipid IV(A) biosynthesis; lipid IV(A) from (3R)-3-hydroxytetradecanoyl-[acyl-carrier-protein] and UDP-N-acetyl-alpha-D-glucosamine: step 2/6. Functionally, catalyzes the hydrolysis of UDP-3-O-myristoyl-N-acetylglucosamine to form UDP-3-O-myristoylglucosamine and acetate, the committed step in lipid A biosynthesis. This Acidovorax sp. (strain JS42) protein is UDP-3-O-acyl-N-acetylglucosamine deacetylase.